A 398-amino-acid chain; its full sequence is Cystathionine gamma-lyase (398 aa).

Positions 61, 113, and 118 each coordinate substrate. Lysine 211 carries the N6-(pyridoxal phosphate)lysine modification. Glutamate 338 lines the substrate pocket.

The protein belongs to the trans-sulfuration enzymes family. In terms of assembly, homotetramer. Interacts with CALM in a calcium-dependent manner. Pyridoxal 5'-phosphate is required as a cofactor. Detected in liver and kidney, and at lower levels in small intestine (at protein level). Highly expressed in liver, kidney and lung, detected at lower levels in stomach, small intestine and adipose tissue, and hardly found in heart, bone, and thymus.

It localises to the cytoplasm. The catalysed reaction is L,L-cystathionine + H2O = 2-oxobutanoate + L-cysteine + NH4(+). It catalyses the reaction L-cysteine + H2O = hydrogen sulfide + pyruvate + NH4(+) + H(+). It carries out the reaction L-homocysteine + H2O = 2-oxobutanoate + hydrogen sulfide + NH4(+) + H(+). The enzyme catalyses L-homoserine = 2-oxobutanoate + NH4(+). The catalysed reaction is L-selenocystathionine + H2O = L-selenocysteine + 2-oxobutanoate + NH4(+). It functions in the pathway amino-acid biosynthesis; L-cysteine biosynthesis; L-cysteine from L-homocysteine and L-serine: step 2/2. Activated by calmodulin in the presence of calcium ions. Catalyzes the last step in the trans-sulfuration pathway from L-methionine to L-cysteine in a pyridoxal-5'-phosphate (PLP)-dependent manner, which consists on cleaving the L,L-cystathionine molecule into L-cysteine, ammonia and 2-oxobutanoate. Part of the L-cysteine derived from the trans-sulfuration pathway is utilized for biosynthesis of the ubiquitous antioxidant glutathione. Besides its role in the conversion of L-cystathionine into L-cysteine, it utilizes L-cysteine and L-homocysteine as substrates (at much lower rates than L,L-cystathionine) to produce hydrogen sulfide (H2S). In vitro, it converts two L-cysteine molecules into lanthionine and H2S, and two L-homocysteine molecules to homolanthionine and H2S, which can be particularly relevant under conditions of severe hyperhomocysteinemia. Lanthionine and homolanthionine are structural homologs of L,L-cystathionine that differ by the absence or presence of an extra methylene group, respectively. Acts as a cysteine-protein sulfhydrase by mediating sulfhydration of target proteins: sulfhydration consists of converting -SH groups into -SSH on specific cysteine residues of target proteins such as GAPDH, PTPN1 and NF-kappa-B subunit RELA, thereby regulating their function. By generating the gasotransmitter H2S, it participates in a number of physiological processes such as vasodilation, bone protection, and inflammation. Plays an essential role in myogenesis by contributing to the biogenesis of H2S in skeletal muscle tissue. Can also accept homoserine as substrate. Catalyzes the elimination of selenocystathionine (which can be derived from the diet) to yield selenocysteine, ammonia and 2-oxobutanoate. This is Cystathionine gamma-lyase (Cth) from Mus musculus (Mouse).